A 181-amino-acid chain; its full sequence is Protein GrpE (181 aa).

Over residues 1–13 (MENTQENPATQSA) the composition is skewed to polar residues. The disordered stretch occupies residues 1 to 34 (MENTQENPATQSAEDIGSAKQAAQGAAPAAEAAD). Residues 19 to 34 (AKQAAQGAAPAAEAAD) show a composition bias toward low complexity.

This sequence belongs to the GrpE family. Homodimer.

It localises to the cytoplasm. Participates actively in the response to hyperosmotic and heat shock by preventing the aggregation of stress-denatured proteins, in association with DnaK and GrpE. It is the nucleotide exchange factor for DnaK and may function as a thermosensor. Unfolded proteins bind initially to DnaJ; upon interaction with the DnaJ-bound protein, DnaK hydrolyzes its bound ATP, resulting in the formation of a stable complex. GrpE releases ADP from DnaK; ATP binding to DnaK triggers the release of the substrate protein, thus completing the reaction cycle. Several rounds of ATP-dependent interactions between DnaJ, DnaK and GrpE are required for fully efficient folding. The chain is Protein GrpE from Burkholderia vietnamiensis (strain G4 / LMG 22486) (Burkholderia cepacia (strain R1808)).